Consider the following 381-residue polypeptide: Putative MgpC-like protein MPN_503 (381 aa).

The segment at 1–109 is disordered; it reads MNGVAQDKVH…TDSQQSGHNS (109 aa). Positions 13–31 are enriched in polar residues; that stretch reads EQTTQWNQQASQKNLTNNP. Basic and acidic residues-rich tracts occupy residues 40–51 and 61–73; these read KLDKGRAYRKLN and DSTK…DKDG. The span at 89 to 109 shows a compositional bias: polar residues; that stretch reads VSSTESQMAAVTDSQQSGHNS.

Belongs to the MgpC family.

In Mycoplasma pneumoniae (strain ATCC 29342 / M129 / Subtype 1) (Mycoplasmoides pneumoniae), this protein is Putative MgpC-like protein MPN_503.